Consider the following 101-residue polypeptide: Small ribosomal subunit protein uS14 (101 aa).

The protein belongs to the universal ribosomal protein uS14 family. In terms of assembly, part of the 30S ribosomal subunit. Contacts proteins S3 and S10.

Binds 16S rRNA, required for the assembly of 30S particles and may also be responsible for determining the conformation of the 16S rRNA at the A site. The chain is Small ribosomal subunit protein uS14 from Rhizobium etli (strain CIAT 652).